A 348-amino-acid polypeptide reads, in one-letter code: Centromere protein L (348 aa).

The protein belongs to the CENP-L/IML3 family.

It localises to the nucleus. The protein resides in the chromosome. Its subcellular location is the centromere. In terms of biological role, probable component of a centromeric complex involved in assembly of kinetochore proteins, mitotic progression and chromosome segregation. The protein is Centromere protein L (cenpl) of Xenopus tropicalis (Western clawed frog).